The following is a 2595-amino-acid chain: Glucosylceramide transporter ABCA12 (2595 aa).

The helical transmembrane segment at 23-43 threads the bilayer; that stretch reads PLWTLVLILWPVIIFIILAIT. Residues 109 to 119 show a composition bias toward basic and acidic residues; that stretch reads LKKPSNPKRDS. Residues 109-143 are disordered; it reads LKKPSNPKRDSNLSLRSTQVPERSHTSLATVPPRP. 23 N-linked (GlcNAc...) asparagine glycosylation sites follow: asparagine 120, asparagine 156, asparagine 174, asparagine 214, asparagine 275, asparagine 331, asparagine 365, asparagine 381, asparagine 410, asparagine 433, asparagine 455, asparagine 526, asparagine 541, asparagine 574, asparagine 605, asparagine 645, asparagine 749, asparagine 773, asparagine 812, asparagine 823, asparagine 854, asparagine 917, and asparagine 960. The span at 120–137 shows a compositional bias: polar residues; sequence NLSLRSTQVPERSHTSLA. 3 helical membrane-spanning segments follow: residues 1062–1082, 1109–1129, and 1142–1162; these read VSYS…AAFV, FAWL…LIVI, and FILF…SYLI. Asparagine 1167 carries an N-linked (GlcNAc...) asparagine glycan. 3 helical membrane passes run 1171 to 1191, 1197 to 1217, and 1247 to 1267; these read IAAL…IVLV, LSYV…SYAS, and FGWL…IAWY. A glycan (N-linked (GlcNAc...) asparagine) is linked at asparagine 1319. One can recognise an ABC transporter 1 domain in the interval 1346-1577; the sequence is VALHGVTKIY…FGDGYHLTLT (232 aa). Position 1378–1385 (1378–1385) interacts with ATP; that stretch reads GPNGAGKT. Asparagine 1524, asparagine 1663, asparagine 1673, asparagine 1686, asparagine 1690, and asparagine 1704 each carry an N-linked (GlcNAc...) asparagine glycan. Residues 1672–1703 are disordered; that stretch reads SNMSLEHLTQRKVGNPSANGTSTPDDLSVSSS. The span at 1687-1703 shows a compositional bias: polar residues; it reads PSANGTSTPDDLSVSSS. A helical transmembrane segment spans residues 1747 to 1767; that stretch reads LIAQVILPIVFVATAMGLGTL. Asparagine 1819, asparagine 1835, asparagine 1876, asparagine 1921, and asparagine 1952 each carry an N-linked (GlcNAc...) asparagine glycan. Helical transmembrane passes span 1979–1999, 2035–2055, 2072–2092, 2103–2123, 2143–2163, 2187–2207, and 2270–2290; these read ATIS…GYSV, FIYD…VIAI, LLLL…AGLF, VCVN…VYFL, IFLI…SQQQ, GAMF…RLLI, and IIAV…GLLG. The 236-residue stretch at 2254-2489 folds into the ABC transporter 2 domain; the sequence is VQLHRLTKTY…FGRGFTVKVH (236 aa). Residue 2290-2297 coordinates ATP; sequence GVNGAGKT. N-linked (GlcNAc...) asparagine glycans are attached at residues asparagine 2318, asparagine 2542, and asparagine 2547. Over residues 2575–2587 the composition is skewed to polar residues; it reads VDTSSQGSTISVD. The tract at residues 2575–2595 is disordered; the sequence is VDTSSQGSTISVDSQEDQLDS.

Belongs to the ABC transporter superfamily. ABCA family. Interacts with NR1H2 and ABCA1; this interaction is required for ABCA1 localization to the cell surface and is necessary for its normal activity and stability. In terms of tissue distribution, expressed in a number of other tissues besides skin, including heart, intestine, stomach, and kidney. Expressed mainly in the granular layer of the skin. Expressed in lung. Expressed in alpha and beta cells of pancreatic islets.

It is found in the cytoplasmic vesicle. The protein localises to the secretory vesicle membrane. It localises to the golgi apparatus membrane. The enzyme catalyses ATP + H2O + phospholipidSide 1 = ADP + phosphate + phospholipidSide 2.. The catalysed reaction is a beta-D-glucosylceramide(in) + ATP + H2O = a beta-D-glucosylceramide(out) + ADP + phosphate + H(+). Its function is as follows. Transports lipids such as glucosylceramides from the outer to the inner leaflet of lamellar granules (LGs) membrane, whereby the lipids are finally transported to the keratinocyte periphery via the trans-Golgi network and LGs and released to the apical surface of the granular keratinocytes to form lipid lamellae in the stratum corneum of the epidermis, which is essential for skin barrier function. In the meantime, participates in the transport of the lamellar granules-associated proteolytic enzymes, in turn regulates desquamation and keratinocyte differentiation. Furthermore, is essential for the regulation of cellular cholesterol homeostasis by regulating ABCA1-dependent cholesterol efflux from macrophages through interaction with NR1H2 and ABCA1. Plays pleiotropic roles in regulating glucose stimulated insulin secretion from beta cells, regulating the morphology and fusion of insulin granules, lipid raft abundance and the actin cytoskeleton. Also involved in lung surfactant biogenesis. The polypeptide is Glucosylceramide transporter ABCA12 (Mus musculus (Mouse)).